Reading from the N-terminus, the 101-residue chain is DET1- and DDB1-associated protein 1 (101 aa).

The interval 67–101 (NAAKKRDQDQLEIGETSAPPRKIARTDSQEMNEDT) is disordered.

This sequence belongs to the DDA1 family. In terms of assembly, component of numerous DCX (DDB1-CUL4-X-box) E3 ubiquitin-protein ligase complexes which consist of a core of DDB1, cullin-4 (CUL4A or CUL4B), DDA1 and RBX1.

It participates in protein modification; protein ubiquitination. Functionally, functions as a component of numerous distinct DCX (DDB1-CUL4-X-box) E3 ubiquitin-protein ligase complexes which mediate the ubiquitination and subsequent proteasomal degradation of target proteins. In the DCX complexes, acts as a scaffolding subunit required to stabilize the complex. The chain is DET1- and DDB1-associated protein 1 from Xenopus laevis (African clawed frog).